We begin with the raw amino-acid sequence, 444 residues long: Signal recognition particle 54 kDa protein (444 aa).

GTP is bound by residues 102-109 (GVQGSGKT), 184-188 (DTAGR), and 244-247 (SKMD).

It belongs to the GTP-binding SRP family. SRP54 subfamily. In terms of assembly, part of the signal recognition particle protein translocation system, which is composed of SRP and FtsY. Archaeal SRP consists of a 7S RNA molecule of 300 nucleotides and two protein subunits: SRP54 and SRP19.

The protein localises to the cytoplasm. The enzyme catalyses GTP + H2O = GDP + phosphate + H(+). In terms of biological role, involved in targeting and insertion of nascent membrane proteins into the cytoplasmic membrane. Binds to the hydrophobic signal sequence of the ribosome-nascent chain (RNC) as it emerges from the ribosomes. The SRP-RNC complex is then targeted to the cytoplasmic membrane where it interacts with the SRP receptor FtsY. The polypeptide is Signal recognition particle 54 kDa protein (Sulfolobus acidocaldarius (strain ATCC 33909 / DSM 639 / JCM 8929 / NBRC 15157 / NCIMB 11770)).